The chain runs to 47 residues: uncharacterized protein (47 aa).

The first 25 residues, 1-25 (MAHKCASAKLLSGIMALLFNGKSLL), serve as a signal peptide directing secretion.

This is an uncharacterized protein from Saccharomyces cerevisiae (strain ATCC 204508 / S288c) (Baker's yeast).